A 237-amino-acid polypeptide reads, in one-letter code: Ribitol-5-phosphate cytidylyltransferase (237 aa).

CTP contacts are provided by residues 7 to 10 and 80 to 86; these read LAGG and GEDRNET.

Belongs to the IspD/TarI cytidylyltransferase family. TarI subfamily.

It carries out the reaction D-ribitol 5-phosphate + CTP + H(+) = CDP-L-ribitol + diphosphate. It functions in the pathway cell wall biogenesis; poly(ribitol phosphate) teichoic acid biosynthesis. Catalyzes the transfer of the cytidylyl group of CTP to D-ribitol 5-phosphate. The polypeptide is Ribitol-5-phosphate cytidylyltransferase (Listeria innocua serovar 6a (strain ATCC BAA-680 / CLIP 11262)).